Here is a 76-residue protein sequence, read N- to C-terminus: Putative snRNP Sm-like protein (76 aa).

The Sm domain maps to 4-76; that stretch reads RPLDVIHKSL…VLAISPVEIE (73 aa).

The protein belongs to the snRNP Sm proteins family.

This chain is Putative snRNP Sm-like protein, found in Thermococcus sibiricus (strain DSM 12597 / MM 739).